We begin with the raw amino-acid sequence, 274 residues long: 3-methyl-2-oxobutanoate hydroxymethyltransferase (274 aa).

Asp-50 and Asp-89 together coordinate Mg(2+). 3-methyl-2-oxobutanoate contacts are provided by residues Asp-50 to Ser-51, Asp-89, and Lys-119. Residue Glu-121 participates in Mg(2+) binding. The Proton acceptor role is filled by Glu-188.

It belongs to the PanB family. Homodecamer; pentamer of dimers. Mg(2+) serves as cofactor.

It is found in the cytoplasm. The catalysed reaction is 3-methyl-2-oxobutanoate + (6R)-5,10-methylene-5,6,7,8-tetrahydrofolate + H2O = 2-dehydropantoate + (6S)-5,6,7,8-tetrahydrofolate. It participates in cofactor biosynthesis; (R)-pantothenate biosynthesis; (R)-pantoate from 3-methyl-2-oxobutanoate: step 1/2. Catalyzes the reversible reaction in which hydroxymethyl group from 5,10-methylenetetrahydrofolate is transferred onto alpha-ketoisovalerate to form ketopantoate. The polypeptide is 3-methyl-2-oxobutanoate hydroxymethyltransferase (Methylorubrum populi (strain ATCC BAA-705 / NCIMB 13946 / BJ001) (Methylobacterium populi)).